The following is a 187-amino-acid chain: Elongation factor P (187 aa).

Belongs to the elongation factor P family.

It localises to the cytoplasm. It participates in protein biosynthesis; polypeptide chain elongation. In terms of biological role, involved in peptide bond synthesis. Stimulates efficient translation and peptide-bond synthesis on native or reconstituted 70S ribosomes in vitro. Probably functions indirectly by altering the affinity of the ribosome for aminoacyl-tRNA, thus increasing their reactivity as acceptors for peptidyl transferase. The polypeptide is Elongation factor P (Wolinella succinogenes (strain ATCC 29543 / DSM 1740 / CCUG 13145 / JCM 31913 / LMG 7466 / NCTC 11488 / FDC 602W) (Vibrio succinogenes)).